The sequence spans 485 residues: Cobyric acid synthase (485 aa).

Positions 250–448 (TQTVAVIAYP…LHGMFEDPRV (199 aa)) constitute a GATase cobBQ-type domain. The active-site Nucleophile is the Cys334. Residue His440 is part of the active site.

Belongs to the CobB/CobQ family. CobQ subfamily.

It participates in cofactor biosynthesis; adenosylcobalamin biosynthesis. Catalyzes amidations at positions B, D, E, and G on adenosylcobyrinic A,C-diamide. NH(2) groups are provided by glutamine, and one molecule of ATP is hydrogenolyzed for each amidation. This chain is Cobyric acid synthase, found in Polaromonas naphthalenivorans (strain CJ2).